A 362-amino-acid polypeptide reads, in one-letter code: Phosphoserine aminotransferase (362 aa).

Arg42 lines the L-glutamate pocket. Residues 76-77 (AR), Trp102, Thr153, Asp174, and Gln197 contribute to the pyridoxal 5'-phosphate site. N6-(pyridoxal phosphate)lysine is present on Lys198. 239 to 240 (NT) contributes to the pyridoxal 5'-phosphate binding site.

This sequence belongs to the class-V pyridoxal-phosphate-dependent aminotransferase family. SerC subfamily. Homodimer. Pyridoxal 5'-phosphate serves as cofactor.

It localises to the cytoplasm. The enzyme catalyses O-phospho-L-serine + 2-oxoglutarate = 3-phosphooxypyruvate + L-glutamate. It carries out the reaction 4-(phosphooxy)-L-threonine + 2-oxoglutarate = (R)-3-hydroxy-2-oxo-4-phosphooxybutanoate + L-glutamate. The protein operates within amino-acid biosynthesis; L-serine biosynthesis; L-serine from 3-phospho-D-glycerate: step 2/3. It functions in the pathway cofactor biosynthesis; pyridoxine 5'-phosphate biosynthesis; pyridoxine 5'-phosphate from D-erythrose 4-phosphate: step 3/5. Its function is as follows. Catalyzes the reversible conversion of 3-phosphohydroxypyruvate to phosphoserine and of 3-hydroxy-2-oxo-4-phosphonooxybutanoate to phosphohydroxythreonine. In Proteus mirabilis (strain HI4320), this protein is Phosphoserine aminotransferase.